A 324-amino-acid chain; its full sequence is Uroporphyrinogen decarboxylase (324 aa).

Residues 14-18, phenylalanine 32, aspartate 63, tyrosine 136, serine 191, and histidine 302 contribute to the substrate site; that span reads RQAGR.

It belongs to the uroporphyrinogen decarboxylase family. Homodimer.

The protein resides in the cytoplasm. The enzyme catalyses uroporphyrinogen III + 4 H(+) = coproporphyrinogen III + 4 CO2. It functions in the pathway porphyrin-containing compound metabolism; protoporphyrin-IX biosynthesis; coproporphyrinogen-III from 5-aminolevulinate: step 4/4. Catalyzes the decarboxylation of four acetate groups of uroporphyrinogen-III to yield coproporphyrinogen-III. This Neorickettsia sennetsu (strain ATCC VR-367 / Miyayama) (Ehrlichia sennetsu) protein is Uroporphyrinogen decarboxylase.